The primary structure comprises 73 residues: UPF0337 protein lp_1708 (73 aa).

Basic and acidic residues-rich tracts occupy residues 1-35 and 44-73; these read MSDV…REAQ and KAKD…KSDD. A disordered region spans residues 1 to 73; sequence MSDVNKKFDS…KDKMKKKSDD (73 aa).

This sequence belongs to the UPF0337 (CsbD) family.

In Lactiplantibacillus plantarum (strain ATCC BAA-793 / NCIMB 8826 / WCFS1) (Lactobacillus plantarum), this protein is UPF0337 protein lp_1708.